Here is a 170-residue protein sequence, read N- to C-terminus: Large ribosomal subunit protein uL10 (170 aa).

This sequence belongs to the universal ribosomal protein uL10 family. In terms of assembly, part of the ribosomal stalk of the 50S ribosomal subunit. The N-terminus interacts with L11 and the large rRNA to form the base of the stalk. The C-terminus forms an elongated spine to which L12 dimers bind in a sequential fashion forming a multimeric L10(L12)X complex.

Forms part of the ribosomal stalk, playing a central role in the interaction of the ribosome with GTP-bound translation factors. The polypeptide is Large ribosomal subunit protein uL10 (Chlamydia caviae (strain ATCC VR-813 / DSM 19441 / 03DC25 / GPIC) (Chlamydophila caviae)).